The following is a 157-amino-acid chain: Nucleoside diphosphate kinase (157 aa).

Residues Lys-12, Phe-60, Arg-88, Thr-94, and Arg-105 each contribute to the ATP site. His-121 serves as the catalytic Pros-phosphohistidine intermediate.

Belongs to the NDK family. Mg(2+) is required as a cofactor.

Its subcellular location is the cytoplasm. It catalyses the reaction a 2'-deoxyribonucleoside 5'-diphosphate + ATP = a 2'-deoxyribonucleoside 5'-triphosphate + ADP. The enzyme catalyses a ribonucleoside 5'-diphosphate + ATP = a ribonucleoside 5'-triphosphate + ADP. In terms of biological role, major role in the synthesis of nucleoside triphosphates other than ATP. The ATP gamma phosphate is transferred to the NDP beta phosphate via a ping-pong mechanism, using a phosphorylated active-site intermediate. The polypeptide is Nucleoside diphosphate kinase (Pyrococcus horikoshii (strain ATCC 700860 / DSM 12428 / JCM 9974 / NBRC 100139 / OT-3)).